The sequence spans 131 residues: Large ribosomal subunit protein mL60 (131 aa).

Residues 1–12 constitute a mitochondrion transit peptide; the sequence is MFGPFKLTSPVA.

The protein belongs to the mitochondrion-specific ribosomal protein mL60 family. In terms of assembly, component of the mitochondrial large ribosomal subunit (mt-LSU). Mature yeast 74S mitochondrial ribosomes consist of a small (37S) and a large (54S) subunit. The 37S small subunit contains a 15S ribosomal RNA (15S mt-rRNA) and 34 different proteins. The 54S large subunit contains a 21S rRNA (21S mt-rRNA) and 46 different proteins.

It localises to the mitochondrion. Functionally, component of the mitochondrial ribosome (mitoribosome), a dedicated translation machinery responsible for the synthesis of mitochondrial genome-encoded proteins, including at least some of the essential transmembrane subunits of the mitochondrial respiratory chain. The mitoribosomes are attached to the mitochondrial inner membrane and translation products are cotranslationally integrated into the membrane. This is Large ribosomal subunit protein mL60 (MRPL31) from Saccharomyces cerevisiae (strain ATCC 204508 / S288c) (Baker's yeast).